The chain runs to 436 residues: Glutamyl-tRNA(Gln) amidotransferase subunit D (436 aa).

Positions 91-420 constitute an Asparaginase/glutaminase domain; sequence QNISIISTGG…GEVAKLMNKN (330 aa). Residues Thr101, Thr177, Asp178, and Lys254 contribute to the active site.

This sequence belongs to the asparaginase 1 family. GatD subfamily. As to quaternary structure, heterodimer of GatD and GatE.

It catalyses the reaction L-glutamyl-tRNA(Gln) + L-glutamine + ATP + H2O = L-glutaminyl-tRNA(Gln) + L-glutamate + ADP + phosphate + H(+). In terms of biological role, allows the formation of correctly charged Gln-tRNA(Gln) through the transamidation of misacylated Glu-tRNA(Gln) in organisms which lack glutaminyl-tRNA synthetase. The reaction takes place in the presence of glutamine and ATP through an activated gamma-phospho-Glu-tRNA(Gln). The GatDE system is specific for glutamate and does not act on aspartate. The polypeptide is Glutamyl-tRNA(Gln) amidotransferase subunit D (Methanobrevibacter smithii (strain ATCC 35061 / DSM 861 / OCM 144 / PS)).